The chain runs to 343 residues: Dihydroorotase (343 aa).

Residues His-13 and His-15 each contribute to the Zn(2+) site. Residues 15–17 and Asn-41 each bind substrate; that span reads HLR. Lys-99, His-136, and His-174 together coordinate Zn(2+). At Lys-99 the chain carries N6-carboxylysine. His-136 contacts substrate. Position 219 (Leu-219) interacts with substrate. A Zn(2+)-binding site is contributed by Asp-247. Asp-247 is an active-site residue. Positions 251 and 263 each coordinate substrate.

Belongs to the metallo-dependent hydrolases superfamily. DHOase family. Class II DHOase subfamily. Homodimer. Zn(2+) is required as a cofactor.

The enzyme catalyses (S)-dihydroorotate + H2O = N-carbamoyl-L-aspartate + H(+). The protein operates within pyrimidine metabolism; UMP biosynthesis via de novo pathway; (S)-dihydroorotate from bicarbonate: step 3/3. In terms of biological role, catalyzes the reversible cyclization of carbamoyl aspartate to dihydroorotate. In Alkalilimnicola ehrlichii (strain ATCC BAA-1101 / DSM 17681 / MLHE-1), this protein is Dihydroorotase.